The following is a 943-amino-acid chain: TBC1 domain family member 2B (943 aa).

The segment at 1 to 29 is disordered; sequence MPGVEDPCDSQGTPPEEPSTSVAPGEAAK. Residues 10–22 are compositionally biased toward polar residues; it reads SQGTPPEEPSTSV. The region spanning 32-129 is the PH domain; it reads SPRLCGYLAK…WLQELQQKRW (98 aa). Residues 315–514 are a coiled coil; sequence RMESDVLLKL…ARYSNLEAKM (200 aa). A Rab-GAP TBC domain is found at 642–836; the sequence is GIPHEHRSRM…RIWDSLLYEG (195 aa).

It is found in the early endosome. GTPase-activating protein that plays a role in the early steps of endocytosis. This chain is TBC1 domain family member 2B (tbc1d2b), found in Xenopus tropicalis (Western clawed frog).